Here is a 148-residue protein sequence, read N- to C-terminus: Large ribosomal subunit protein bL9 (148 aa).

It belongs to the bacterial ribosomal protein bL9 family.

In terms of biological role, binds to the 23S rRNA. The polypeptide is Large ribosomal subunit protein bL9 (Desulfitobacterium hafniense (strain DSM 10664 / DCB-2)).